A 47-amino-acid chain; its full sequence is Gene 60 protein (47 aa).

This is Gene 60 protein (60) from Mycobacterium phage L5 (Mycobacteriophage L5).